Consider the following 327-residue polypeptide: Mycothiol acetyltransferase (327 aa).

N-acetyltransferase domains follow at residues 11 to 159 and 162 to 327; these read EPHG…VTLP and VQIR…EGTS. Glutamate 42 contributes to the 1D-myo-inositol 2-(L-cysteinylamino)-2-deoxy-alpha-D-glucopyranoside binding site. Residue 89–91 coordinates acetyl-CoA; the sequence is LVI. 1D-myo-inositol 2-(L-cysteinylamino)-2-deoxy-alpha-D-glucopyranoside contacts are provided by glutamate 189, lysine 228, and glutamate 251. Acetyl-CoA contacts are provided by residues 255–257 and 262–268; these read LGV and QGLGLGR. Position 289 (tyrosine 289) interacts with 1D-myo-inositol 2-(L-cysteinylamino)-2-deoxy-alpha-D-glucopyranoside. Residue 294–299 participates in acetyl-CoA binding; it reads NAPAIR.

Belongs to the acetyltransferase family. MshD subfamily. In terms of assembly, monomer.

It catalyses the reaction 1D-myo-inositol 2-(L-cysteinylamino)-2-deoxy-alpha-D-glucopyranoside + acetyl-CoA = mycothiol + CoA + H(+). In terms of biological role, catalyzes the transfer of acetyl from acetyl-CoA to desacetylmycothiol (Cys-GlcN-Ins) to form mycothiol. This is Mycothiol acetyltransferase from Acidothermus cellulolyticus (strain ATCC 43068 / DSM 8971 / 11B).